Reading from the N-terminus, the 311-residue chain is Porphobilinogen deaminase (311 aa).

At Cys-242 the chain carries S-(dipyrrolylmethanemethyl)cysteine.

Belongs to the HMBS family. Monomer. Dipyrromethane is required as a cofactor.

It catalyses the reaction 4 porphobilinogen + H2O = hydroxymethylbilane + 4 NH4(+). It functions in the pathway porphyrin-containing compound metabolism; protoporphyrin-IX biosynthesis; coproporphyrinogen-III from 5-aminolevulinate: step 2/4. Its function is as follows. Tetrapolymerization of the monopyrrole PBG into the hydroxymethylbilane pre-uroporphyrinogen in several discrete steps. The polypeptide is Porphobilinogen deaminase (hemC) (Neisseria meningitidis serogroup A / serotype 4A (strain DSM 15465 / Z2491)).